Here is a 280-residue protein sequence, read N- to C-terminus: MAIRKYKPTTPGRRQSSVSEFAEITRSTPEKSLLRPLSKTGGRNVHGHITTRHKGGGHKRRYRVIDFRRNDKDGVLAKVAHIEYDPNRTANIALLHYRDGEKRYIIAPRGLQQGALLESGPNADIKVGNNLPLRNIPTGTTIHAVELKPGGGAKMARSAGASIQLLGKEGKYAVLRMPSTEIRRVDIRCRATIGEVGNADQINIRWGKAGRMRWKGVRPTVRGVVMNPVDHPHGGGEGKTSGGRHPVSPWGQPEGRTRKPNRPSDRMIVRRRRSNKNKKR.

Disordered regions lie at residues 1–59 (MAIR…GGHK) and 223–280 (GVVM…NKKR). 2 stretches are compositionally biased toward basic residues: residues 45-59 (VHGH…GGHK) and 269-280 (VRRRRSNKNKKR).

The protein belongs to the universal ribosomal protein uL2 family. As to quaternary structure, part of the 50S ribosomal subunit. Forms a bridge to the 30S subunit in the 70S ribosome.

In terms of biological role, one of the primary rRNA binding proteins. Required for association of the 30S and 50S subunits to form the 70S ribosome, for tRNA binding and peptide bond formation. It has been suggested to have peptidyltransferase activity; this is somewhat controversial. Makes several contacts with the 16S rRNA in the 70S ribosome. The polypeptide is Large ribosomal subunit protein uL2 (Corynebacterium jeikeium (strain K411)).